The sequence spans 320 residues: Transcription factor MYB80 (320 aa).

HTH myb-type domains lie at 9-65 (KENV…RPDL) and 66-116 (KHGQ…KKKL). 2 consecutive DNA-binding regions (H-T-H motif) follow at residues 37–61 (WRLIPKNAGLQRCGKSCRLRWTNYL) and 89–112 (WSLIAAQLPGRTDNDVKNYWNTKL). The interval 257-283 (TAAAEEEERRKLKGEVVDQEEIGSEGG) is disordered. A compositionally biased stretch (basic and acidic residues) spans 263 to 272 (EERRKLKGEV).

As to expression, expressed in the tapetum and middle layer of developing anthers. Expressed in trichomes.

The protein resides in the nucleus. Transcription factor that binds to the DNA sequence 5'-CCAACC-3'. Regulates directly PME5, UND and GLOX1. Essential for tapetum development in anthers and microsporogenesis. Regulates the timing of tapetal programmed cell death (PCD) which is critical for pollen development. May act through the activation of UND, encoding an A1 aspartic protease. Required for anther development by regulating tapetum development, callose dissolution and exine formation. Acts upstream of A6 and FAR2/MS2, two genes required for pollen exine formation. Negatively regulates trichome endoreduplication and trichome branching. The chain is Transcription factor MYB80 from Arabidopsis thaliana (Mouse-ear cress).